A 147-amino-acid polypeptide reads, in one-letter code: Microsomal glutathione S-transferase 2 (147 aa).

Transmembrane regions (helical) follow at residues 6–26 (ILLA…ALQV), 59–79 (FYPI…QVFA), and 111–131 (SLGI…NSFL).

It belongs to the MAPEG family. Homotrimer. As to expression, liver, spleen, skeletal muscle, heart, adrenals, pancreas, prostate, testis, fetal liver, and fetal spleen. Very low expression in lung, brain, placenta and bone marrow. Abundantly expressed in human umbilical vein endothelial cells (at protein level).

The protein localises to the endoplasmic reticulum membrane. The protein resides in the microsome membrane. The enzyme catalyses RX + glutathione = an S-substituted glutathione + a halide anion + H(+). It catalyses the reaction 1-chloro-2,4-dinitrobenzene + glutathione = 2,4-dinitrophenyl-S-glutathione + chloride + H(+). The catalysed reaction is leukotriene C4 = leukotriene A4 + glutathione. It carries out the reaction (5S)-hydroperoxy-(6E,8Z,11Z,14Z)-eicosatetraenoate + 2 glutathione = (5S)-hydroxy-(6E,8Z,11Z,14Z)-eicosatetraenoate + glutathione disulfide + H2O. Its activity is regulated as follows. Each monomer can bind on GSH molecule but only one subunit is catalytically active. Catalyzes several different glutathione-dependent reactions. Catalyzes the glutathione-dependent reduction of lipid hydroperoxides, such as 5-HPETE. Has glutathione transferase activity, toward xenobiotic electrophiles, such as 1-chloro-2, 4-dinitrobenzene (CDNB). Also catalyzes the conjugation of leukotriene A4 with reduced glutathione to form leukotriene C4 (LTC4). Involved in oxidative DNA damage induced by ER stress and anticancer agents by activating LTC4 biosynthetic machinery in nonimmune cells. The polypeptide is Microsomal glutathione S-transferase 2 (MGST2) (Homo sapiens (Human)).